The following is a 144-amino-acid chain: Grifin (144 aa).

The region spanning 5 to 133 is the Galectin domain; it reads FEAFCAGGLA…DHQLAQVELA (129 aa). The residue at position 138 (Ser-138) is a Phosphoserine.

As to quaternary structure, homodimer. As to expression, lens-specific. Located at the interface between lens fiber cells (at protein level).

This is Grifin (Grifin) from Rattus norvegicus (Rat).